A 239-amino-acid polypeptide reads, in one-letter code: Probable transcriptional regulatory protein lin0388 (239 aa).

This sequence belongs to the TACO1 family. YeeN subfamily.

The protein resides in the cytoplasm. The polypeptide is Probable transcriptional regulatory protein lin0388 (Listeria innocua serovar 6a (strain ATCC BAA-680 / CLIP 11262)).